The sequence spans 163 residues: Cyclic pyranopterin monophosphate synthase (163 aa).

Residues Met-75–His-77 and Met-113–Glu-114 contribute to the substrate site. The active site involves Asp-128.

Belongs to the MoaC family. As to quaternary structure, homohexamer; trimer of dimers.

It catalyses the reaction (8S)-3',8-cyclo-7,8-dihydroguanosine 5'-triphosphate = cyclic pyranopterin phosphate + diphosphate. The protein operates within cofactor biosynthesis; molybdopterin biosynthesis. Catalyzes the conversion of (8S)-3',8-cyclo-7,8-dihydroguanosine 5'-triphosphate to cyclic pyranopterin monophosphate (cPMP). The polypeptide is Cyclic pyranopterin monophosphate synthase (Desulforapulum autotrophicum (strain ATCC 43914 / DSM 3382 / VKM B-1955 / HRM2) (Desulfobacterium autotrophicum)).